Consider the following 202-residue polypeptide: 3-isopropylmalate dehydratase small subunit (202 aa).

This sequence belongs to the LeuD family. LeuD type 1 subfamily. In terms of assembly, heterodimer of LeuC and LeuD.

It carries out the reaction (2R,3S)-3-isopropylmalate = (2S)-2-isopropylmalate. Its pathway is amino-acid biosynthesis; L-leucine biosynthesis; L-leucine from 3-methyl-2-oxobutanoate: step 2/4. In terms of biological role, catalyzes the isomerization between 2-isopropylmalate and 3-isopropylmalate, via the formation of 2-isopropylmaleate. This chain is 3-isopropylmalate dehydratase small subunit, found in Rhizobium rhizogenes (strain K84 / ATCC BAA-868) (Agrobacterium radiobacter).